A 233-amino-acid polypeptide reads, in one-letter code: UPF0173 metal-dependent hydrolase Acid345_3437 (233 aa).

This sequence belongs to the UPF0173 family.

The protein is UPF0173 metal-dependent hydrolase Acid345_3437 of Koribacter versatilis (strain Ellin345).